A 96-amino-acid polypeptide reads, in one-letter code: Small ribosomal subunit protein bS6 (96 aa).

Belongs to the bacterial ribosomal protein bS6 family.

Its function is as follows. Binds together with bS18 to 16S ribosomal RNA. This is Small ribosomal subunit protein bS6 from Streptomyces griseus subsp. griseus (strain JCM 4626 / CBS 651.72 / NBRC 13350 / KCC S-0626 / ISP 5235).